The following is a 269-amino-acid chain: Dihydropteroate synthase (269 aa).

Residues 14 to 261 enclose the Pterin-binding domain; that stretch reads TYIMGILNFT…DVLENSRAAK (248 aa). A Mg(2+)-binding site is contributed by N21. (7,8-dihydropterin-6-yl)methyl diphosphate is bound by residues T61, D95, N114, D178, K214, and 249–251; that span reads RVH.

This sequence belongs to the DHPS family. The cofactor is Mg(2+).

The catalysed reaction is (7,8-dihydropterin-6-yl)methyl diphosphate + 4-aminobenzoate = 7,8-dihydropteroate + diphosphate. It participates in cofactor biosynthesis; tetrahydrofolate biosynthesis; 7,8-dihydrofolate from 2-amino-4-hydroxy-6-hydroxymethyl-7,8-dihydropteridine diphosphate and 4-aminobenzoate: step 1/2. Catalyzes the condensation of para-aminobenzoate (pABA) with 6-hydroxymethyl-7,8-dihydropterin diphosphate (DHPt-PP) to form 7,8-dihydropteroate (H2Pte), the immediate precursor of folate derivatives. This Clostridium beijerinckii (strain ATCC 51743 / NCIMB 8052) (Clostridium acetobutylicum) protein is Dihydropteroate synthase.